A 445-amino-acid polypeptide reads, in one-letter code: Phosphoglucosamine mutase (445 aa).

Catalysis depends on S99, which acts as the Phosphoserine intermediate. Residues S99, D242, D244, and D246 each coordinate Mg(2+). S99 bears the Phosphoserine mark.

The protein belongs to the phosphohexose mutase family. Mg(2+) is required as a cofactor. Post-translationally, activated by phosphorylation.

The catalysed reaction is alpha-D-glucosamine 1-phosphate = D-glucosamine 6-phosphate. Functionally, catalyzes the conversion of glucosamine-6-phosphate to glucosamine-1-phosphate. This chain is Phosphoglucosamine mutase, found in Nitratiruptor sp. (strain SB155-2).